The following is a 216-amino-acid chain: Cytidylate kinase (216 aa).

An ATP-binding site is contributed by glycine 7 to threonine 15.

The protein belongs to the cytidylate kinase family. Type 1 subfamily.

It localises to the cytoplasm. It catalyses the reaction CMP + ATP = CDP + ADP. The enzyme catalyses dCMP + ATP = dCDP + ADP. In Chlamydia pneumoniae (Chlamydophila pneumoniae), this protein is Cytidylate kinase.